Reading from the N-terminus, the 156-residue chain is SsrA-binding protein (156 aa).

This sequence belongs to the SmpB family.

It is found in the cytoplasm. Functionally, required for rescue of stalled ribosomes mediated by trans-translation. Binds to transfer-messenger RNA (tmRNA), required for stable association of tmRNA with ribosomes. tmRNA and SmpB together mimic tRNA shape, replacing the anticodon stem-loop with SmpB. tmRNA is encoded by the ssrA gene; the 2 termini fold to resemble tRNA(Ala) and it encodes a 'tag peptide', a short internal open reading frame. During trans-translation Ala-aminoacylated tmRNA acts like a tRNA, entering the A-site of stalled ribosomes, displacing the stalled mRNA. The ribosome then switches to translate the ORF on the tmRNA; the nascent peptide is terminated with the 'tag peptide' encoded by the tmRNA and targeted for degradation. The ribosome is freed to recommence translation, which seems to be the essential function of trans-translation. The polypeptide is SsrA-binding protein (Bacillus pumilus (strain SAFR-032)).